Here is a 171-residue protein sequence, read N- to C-terminus: S-ribosylhomocysteine lyase (171 aa).

Fe cation-binding residues include His54, His58, and Cys128.

It belongs to the LuxS family. Homodimer. Fe cation is required as a cofactor.

The catalysed reaction is S-(5-deoxy-D-ribos-5-yl)-L-homocysteine = (S)-4,5-dihydroxypentane-2,3-dione + L-homocysteine. Its function is as follows. Involved in the synthesis of autoinducer 2 (AI-2) which is secreted by bacteria and is used to communicate both the cell density and the metabolic potential of the environment. The regulation of gene expression in response to changes in cell density is called quorum sensing. Catalyzes the transformation of S-ribosylhomocysteine (RHC) to homocysteine (HC) and 4,5-dihydroxy-2,3-pentadione (DPD). This chain is S-ribosylhomocysteine lyase, found in Proteus mirabilis (strain HI4320).